A 525-amino-acid chain; its full sequence is Cytochrome P450 4V2 (525 aa).

The helical transmembrane segment at 13-33 (LLLWGAASALSLAGASLVLSL) threads the bilayer. 2 residues coordinate heme: glutamate 329 and cysteine 467.

Belongs to the cytochrome P450 family. The cofactor is heme. As to expression, broadly expressed. Detected in heart, brain, placenta, lung, liver, skeletal muscle, kidney, pancreas, retina, retinal pigment epithelium (RPE) and lymphocytes.

The protein resides in the endoplasmic reticulum membrane. The catalysed reaction is dodecanoate + reduced [NADPH--hemoprotein reductase] + O2 = 12-hydroxydodecanoate + oxidized [NADPH--hemoprotein reductase] + H2O + H(+). It carries out the reaction tetradecanoate + reduced [NADPH--hemoprotein reductase] + O2 = 14-hydroxytetradecanoate + oxidized [NADPH--hemoprotein reductase] + H2O + H(+). The enzyme catalyses hexadecanoate + reduced [NADPH--hemoprotein reductase] + O2 = 16-hydroxyhexadecanoate + oxidized [NADPH--hemoprotein reductase] + H2O + H(+). It catalyses the reaction (5Z,8Z,11Z,14Z,17Z)-eicosapentaenoate + reduced [NADPH--hemoprotein reductase] + O2 = 20-hydroxy-(5Z,8Z,11Z,14Z,17Z)-eicosapentaenoate + oxidized [NADPH--hemoprotein reductase] + H2O + H(+). The catalysed reaction is (4Z,7Z,10Z,13Z,16Z,19Z)-docosahexaenoate + reduced [NADPH--hemoprotein reductase] + O2 = 22-hydroxy-(4Z,7Z,10Z,13Z,16Z,19Z)-docosahexaenoate + oxidized [NADPH--hemoprotein reductase] + H2O + H(+). It functions in the pathway lipid metabolism; fatty acid metabolism. Its activity is regulated as follows. Inhibited by N-hydroxy-N'-(4-n-butyl-2-methylphenyl formamidine)(HET0016) with an IC(50) of 38 nM. In terms of biological role, a cytochrome P450 monooxygenase involved in fatty acid metabolism in the eye. Catalyzes the omega-hydroxylation of polyunsaturated fatty acids (PUFAs) docosahexaenoate (DHA) and its precursor eicosapentaenoate (EPA), and may contribute to the homeostasis of these retinal PUFAs. Omega hydroxylates saturated fatty acids such as laurate, myristate and palmitate, the catalytic efficiency decreasing in the following order: myristate &gt; laurate &gt; palmitate (C14&gt;C12&gt;C16). Mechanistically, uses molecular oxygen inserting one oxygen atom into a substrate, and reducing the second into a water molecule, with two electrons provided by NADPH via cytochrome P450 reductase (CPR; NADPH-ferrihemoprotein reductase). The polypeptide is Cytochrome P450 4V2 (CYP4V2) (Homo sapiens (Human)).